Consider the following 438-residue polypeptide: Transcriptional regulator Mb0495 (438 aa).

A compositionally biased stretch (polar residues) spans 1–12 (MYSTNRTSQSLS). Positions 1 to 22 (MYSTNRTSQSLSRKPGRKHQLR) are disordered. Positions 52–73 (VGRDVIAGSTSLSIATVNRQVI) form a DNA-binding region, H-T-H motif.

It belongs to the ROK (NagC/XylR) family.

Functionally, positively regulates the expression of PE13 and PPE18. The polypeptide is Transcriptional regulator Mb0495 (Mycobacterium bovis (strain ATCC BAA-935 / AF2122/97)).